The sequence spans 196 residues: Ribonuclease HII (196 aa).

The 188-residue stretch at 9–196 folds into the RNase H type-2 domain; the sequence is NLIAGVDEVG…APVKRALNLV (188 aa). A divalent metal cation contacts are provided by Asp15, Glu16, and Asp107.

This sequence belongs to the RNase HII family. It depends on Mn(2+) as a cofactor. Requires Mg(2+) as cofactor.

It is found in the cytoplasm. It carries out the reaction Endonucleolytic cleavage to 5'-phosphomonoester.. Functionally, endonuclease that specifically degrades the RNA of RNA-DNA hybrids. The polypeptide is Ribonuclease HII (Proteus mirabilis (strain HI4320)).